Here is a 671-residue protein sequence, read N- to C-terminus: Probable potassium transport system protein Kup 2 (671 aa).

A run of 12 helical transmembrane segments spans residues 18-38 (GFLI…LYAM), 60-80 (VSLV…LIAL), 103-123 (WLII…ALTP), 146-166 (AVMV…RFGA), 173-193 (FGPI…INSF), 218-238 (AGFF…ALYS), 252-272 (WPFV…WLLA), 292-312 (MVIY…QALI), 343-363 (LYIP…VLYF), 373-393 (YSLA…YFLI), 402-422 (IAII…ASLV), and 424-444 (FING…VMFI).

It belongs to the HAK/KUP transporter (TC 2.A.72) family.

The protein resides in the cell membrane. The catalysed reaction is K(+)(in) + H(+)(in) = K(+)(out) + H(+)(out). Its function is as follows. Transport of potassium into the cell. Likely operates as a K(+):H(+) symporter. The polypeptide is Probable potassium transport system protein Kup 2 (Lactococcus lactis subsp. lactis (strain IL1403) (Streptococcus lactis)).